The sequence spans 173 residues: Large ribosomal subunit protein uL15 (173 aa).

Residues 1–11 (MKLNEIRDNQG) show a composition bias toward basic and acidic residues. A disordered region spans residues 1-50 (MKLNEIRDNQGARKSRVRVGRGIGSGLGKTGGRGQKGQKSRSGVSINGFE). The segment covering 21–35 (RGIGSGLGKTGGRGQ) has biased composition (gly residues).

The protein belongs to the universal ribosomal protein uL15 family. As to quaternary structure, part of the 50S ribosomal subunit.

Functionally, binds to the 23S rRNA. In Rhizorhabdus wittichii (strain DSM 6014 / CCUG 31198 / JCM 15750 / NBRC 105917 / EY 4224 / RW1) (Sphingomonas wittichii), this protein is Large ribosomal subunit protein uL15.